Here is a 168-residue protein sequence, read N- to C-terminus: Thermonuclease (168 aa).

Residues 1 to 27 (MKKITTGVLILAIAIVVLIFQYINGDG) form the signal peptide. Active-site residues include Arg64, Glu72, and Arg114.

It belongs to the thermonuclease family. Ca(2+) serves as cofactor.

It localises to the secreted. It carries out the reaction Endonucleolytic cleavage to nucleoside 3'-phosphates and 3'-phosphooligonucleotide end-products.. Its function is as follows. Enzyme that catalyzes the hydrolysis of both DNA and RNA at the 5'-position of the phosphodiester bond. The polypeptide is Thermonuclease (nucI) (Staphylococcus intermedius).